A 258-amino-acid chain; its full sequence is Triosephosphate isomerase (258 aa).

9 to 11 (NWK) lines the substrate pocket. Histidine 105 functions as the Electrophile in the catalytic mechanism. Glutamate 176 functions as the Proton acceptor in the catalytic mechanism. Glycine 182 and serine 214 together coordinate substrate.

This sequence belongs to the triosephosphate isomerase family. As to quaternary structure, homodimer.

The protein localises to the cytoplasm. The enzyme catalyses D-glyceraldehyde 3-phosphate = dihydroxyacetone phosphate. It participates in carbohydrate biosynthesis; gluconeogenesis. The protein operates within carbohydrate degradation; glycolysis; D-glyceraldehyde 3-phosphate from glycerone phosphate: step 1/1. Its function is as follows. Involved in the gluconeogenesis. Catalyzes stereospecifically the conversion of dihydroxyacetone phosphate (DHAP) to D-glyceraldehyde-3-phosphate (G3P). The sequence is that of Triosephosphate isomerase from Mycoplasmopsis agalactiae (strain NCTC 10123 / CIP 59.7 / PG2) (Mycoplasma agalactiae).